Reading from the N-terminus, the 513-residue chain is ATP synthase subunit alpha (513 aa).

169-176 contributes to the ATP binding site; the sequence is GDRQTGKT.

It belongs to the ATPase alpha/beta chains family. As to quaternary structure, F-type ATPases have 2 components, CF(1) - the catalytic core - and CF(0) - the membrane proton channel. CF(1) has five subunits: alpha(3), beta(3), gamma(1), delta(1), epsilon(1). CF(0) has three main subunits: a(1), b(2) and c(9-12). The alpha and beta chains form an alternating ring which encloses part of the gamma chain. CF(1) is attached to CF(0) by a central stalk formed by the gamma and epsilon chains, while a peripheral stalk is formed by the delta and b chains.

It localises to the cell inner membrane. It carries out the reaction ATP + H2O + 4 H(+)(in) = ADP + phosphate + 5 H(+)(out). Functionally, produces ATP from ADP in the presence of a proton gradient across the membrane. The alpha chain is a regulatory subunit. In Shewanella denitrificans (strain OS217 / ATCC BAA-1090 / DSM 15013), this protein is ATP synthase subunit alpha.